Here is a 441-residue protein sequence, read N- to C-terminus: Xaa-Pro dipeptidase (441 aa).

Mn(2+) contacts are provided by D244, D255, H336, E381, and E420.

This sequence belongs to the peptidase M24B family. Bacterial-type prolidase subfamily. It depends on Mn(2+) as a cofactor.

It catalyses the reaction Xaa-L-Pro dipeptide + H2O = an L-alpha-amino acid + L-proline. Functionally, splits dipeptides with a prolyl residue in the C-terminal position. The chain is Xaa-Pro dipeptidase from Xanthomonas axonopodis pv. citri (strain 306).